A 333-amino-acid chain; its full sequence is Cilia- and flagella-associated protein 119 (333 aa).

The segment covering 1-10 has biased composition (polar residues); the sequence is MITPSSSQSL. 2 disordered regions span residues 1 to 70 and 309 to 333; these read MITP…ANLF and RLSSKLAALEQPFQTPPSKGKTKTK. Ser-34 is modified (phosphoserine). Residues 44 to 58 are compositionally biased toward polar residues; the sequence is TDMQTESPAEATSSP. Positions 284–319 form a coiled coil; sequence IKSQLSKELRQLQQLVEERLKESEERLSSKLAALEQ.

The protein localises to the cell projection. It is found in the cilium. It localises to the flagellum. Its subcellular location is the cytoplasmic vesicle. The protein resides in the secretory vesicle. The protein localises to the acrosome. It is found in the cytoplasm. This Mus musculus (Mouse) protein is Cilia- and flagella-associated protein 119.